The following is a 177-amino-acid chain: Ubiquinol-cytochrome c reductase iron-sulfur subunit (177 aa).

Residues 18–38 (IVLTASSVAAVGAACAFWPII) traverse the membrane as a helical segment. The region spanning 88-175 (ARAVKMSELI…YIFISDTKIR (88 aa)) is the Rieske domain. Positions 120, 122, 139, and 142 each coordinate [2Fe-2S] cluster. A disulfide bridge links C125 with C141.

This sequence belongs to the Rieske iron-sulfur protein family. The main subunits of complex b-c1 are: cytochrome b, cytochrome c1 and the Rieske protein. [2Fe-2S] cluster is required as a cofactor.

It is found in the cell membrane. The catalysed reaction is a quinol + 2 Fe(III)-[cytochrome c](out) = a quinone + 2 Fe(II)-[cytochrome c](out) + 2 H(+)(out). Its function is as follows. Component of the ubiquinol-cytochrome c reductase complex (complex III or cytochrome b-c1 complex), which is a respiratory chain that generates an electrochemical potential coupled to ATP synthesis. This chain is Ubiquinol-cytochrome c reductase iron-sulfur subunit (petA), found in Rickettsia typhi (strain ATCC VR-144 / Wilmington).